Reading from the N-terminus, the 706-residue chain is Glutamine-dependent NAD(+) synthetase (706 aa).

A CN hydrolase domain is found at 5–275 (VTVATCALNQ…VEVLTATLDL (271 aa)). The active-site Proton acceptor; for glutaminase activity is Glu45. Lys114 (for glutaminase activity) is an active-site residue. Catalysis depends on Cys175, which acts as the Nucleophile; for glutaminase activity. The ligase stretch occupies residues 325-706 (YHSPEEEISL…AEPQSLDGVD (382 aa)). 355–362 (PLSGGVDS) provides a ligand contact to ATP. The active site involves Ser357.

It in the C-terminal section; belongs to the NAD synthetase family. In terms of assembly, homohexamer.

The enzyme catalyses deamido-NAD(+) + L-glutamine + ATP + H2O = L-glutamate + AMP + diphosphate + NAD(+) + H(+). Its pathway is cofactor biosynthesis; NAD(+) biosynthesis; NAD(+) from deamido-NAD(+) (L-Gln route): step 1/1. Catalyzes the final step of the nicotinamide adenine dinucleotide (NAD) de novo synthesis pathway, the ATP-dependent amidation of deamido-NAD using L-glutamine as a nitrogen source. This is Glutamine-dependent NAD(+) synthetase (NADSYN1) from Homo sapiens (Human).